Reading from the N-terminus, the 612-residue chain is Chaperone protein DnaK (612 aa).

Residue T173 is modified to Phosphothreonine; by autocatalysis. A compositionally biased stretch (basic and acidic residues) spans 524–544; sequence DDKVSEEDKQKAESAKDELKQ. Disordered regions lie at residues 524–560 and 572–612; these read DDKV…KKDA and LYEQ…DDKK. The span at 574–586 shows a compositional bias: low complexity; that stretch reads EQVQQEAQQASGE. A compositionally biased stretch (acidic residues) spans 587–612; it reads QGEESGNQDDDVVDADYSEVDDDDKK.

This sequence belongs to the heat shock protein 70 family.

In terms of biological role, acts as a chaperone. The sequence is that of Chaperone protein DnaK from Oceanobacillus iheyensis (strain DSM 14371 / CIP 107618 / JCM 11309 / KCTC 3954 / HTE831).